The following is a 471-amino-acid chain: Cysteine--tRNA ligase (471 aa).

C30 lines the Zn(2+) pocket. Residues 32–42 (PTVYNFAHIGN) carry the 'HIGH' region motif. C212, H237, and E241 together coordinate Zn(2+). Positions 270–274 (KMSKS) match the 'KMSKS' region motif. K273 is an ATP binding site.

This sequence belongs to the class-I aminoacyl-tRNA synthetase family. As to quaternary structure, monomer. It depends on Zn(2+) as a cofactor.

It localises to the cytoplasm. The catalysed reaction is tRNA(Cys) + L-cysteine + ATP = L-cysteinyl-tRNA(Cys) + AMP + diphosphate. The sequence is that of Cysteine--tRNA ligase from Leptospira interrogans serogroup Icterohaemorrhagiae serovar copenhageni (strain Fiocruz L1-130).